We begin with the raw amino-acid sequence, 341 residues long: Aromatic amino acid aminotransferase (341 aa).

K213 bears the N6-(pyridoxal phosphate)lysine mark.

The protein belongs to the class-II pyridoxal-phosphate-dependent aminotransferase family. Homodimer. Pyridoxal 5'-phosphate serves as cofactor.

It catalyses the reaction an aromatic L-alpha-amino acid + 2-oxoglutarate = an aromatic oxo-acid + L-glutamate. Aminotransferase that catalyzes the conversion of aromatic amino acids and 2-oxoglutarate into corresponding aromatic oxo acids and L-glutamate. In Corynebacterium glutamicum (strain R), this protein is Aromatic amino acid aminotransferase.